The chain runs to 242 residues: Pyridoxine 5'-phosphate synthase (242 aa).

Asn6 is a binding site for 3-amino-2-oxopropyl phosphate. 8–9 (DH) is a 1-deoxy-D-xylulose 5-phosphate binding site. Position 17 (Arg17) interacts with 3-amino-2-oxopropyl phosphate. The active-site Proton acceptor is His42. Positions 44 and 49 each coordinate 1-deoxy-D-xylulose 5-phosphate. Glu69 acts as the Proton acceptor in catalysis. Thr99 is a 1-deoxy-D-xylulose 5-phosphate binding site. His193 serves as the catalytic Proton donor. 3-amino-2-oxopropyl phosphate contacts are provided by residues Gly194 and 217-218 (GH).

It belongs to the PNP synthase family. In terms of assembly, homooctamer; tetramer of dimers.

It localises to the cytoplasm. It carries out the reaction 3-amino-2-oxopropyl phosphate + 1-deoxy-D-xylulose 5-phosphate = pyridoxine 5'-phosphate + phosphate + 2 H2O + H(+). It participates in cofactor biosynthesis; pyridoxine 5'-phosphate biosynthesis; pyridoxine 5'-phosphate from D-erythrose 4-phosphate: step 5/5. Catalyzes the complicated ring closure reaction between the two acyclic compounds 1-deoxy-D-xylulose-5-phosphate (DXP) and 3-amino-2-oxopropyl phosphate (1-amino-acetone-3-phosphate or AAP) to form pyridoxine 5'-phosphate (PNP) and inorganic phosphate. This Aquifex aeolicus (strain VF5) protein is Pyridoxine 5'-phosphate synthase.